Consider the following 411-residue polypeptide: Cladofulvin cluster transcriptional coactivator claA (411 aa).

Residues 1-27 (MSDSLAGNGMRQNLNRSSTSSNHTGHA) show a composition bias toward polar residues. Residues 1–32 (MSDSLAGNGMRQNLNRSSTSSNHTGHAQNGRA) are disordered. The HTH iclR-type domain maps to 47–117 (LACQVQSLAC…DPGHIAHTAL (71 aa)). The H-T-H motif DNA-binding region spans 77–96 (LHDVAELANVPASQLSRVVR).

It localises to the nucleus. Transcriptional coactivator; part of the gene cluster that mediates the biosynthesis of cladofulvin, a conidial pigment not required for virulence but that plays a role in fitness and resistance to environmental stresses including UV light and low-temperature stress. With claE, coregulates the production of cladofulvin. The protein is Cladofulvin cluster transcriptional coactivator claA of Passalora fulva (Tomato leaf mold).